A 668-amino-acid chain; its full sequence is RING finger protein 214 (668 aa).

Disordered stretches follow at residues 1–87 (MAAS…AHEE) and 103–125 (NGSQ…TSLR). N-acetylalanine is present on Ala-2. 4 positions are modified to phosphoserine: Ser-15, Ser-40, Ser-48, and Ser-54. Positions 43–59 (KQKNLSPPSVSSQMITK) are enriched in polar residues. Positions 60–71 (ESNRNAHLEHPE) are enriched in basic and acidic residues. At Ser-196 the chain carries Phosphoserine. A coiled-coil region spans residues 220-379 (QDIEKNLDKM…AEKEAELHLT (160 aa)). The tract at residues 486-552 (FPILNPALSQ…SSETPRPQPV (67 aa)) is disordered. Phosphoserine occurs at positions 497, 511, and 516. Residues 523-536 (PHMPPAASIPPPPG) show a composition bias toward pro residues. An RING-type; atypical zinc finger spans residues 623 to 665 (CLMCQKLVQPSELHPMACTHALHKECIKFWAQTNTNDTCPFCP).

This is RING finger protein 214 (Rnf214) from Mus musculus (Mouse).